Consider the following 678-residue polypeptide: THO complex subunit 5 homolog B (678 aa).

Disordered stretches follow at residues 1 to 37 and 294 to 329; these read MSSD…EEAE and ALFK…VQLD. A Nuclear localization signal motif is present at residues 7-10; it reads KKRK. The segment covering 14–37 has biased composition (basic and acidic residues); sequence NRSEDGKRGRHDEQEGRYYSEEAE. The segment covering 301 to 314 has biased composition (acidic residues); sequence DSQDDESDSDAEEE.

The protein belongs to the THOC5 family. As to quaternary structure, component of the THO subcomplex, which is composed of thoc1, thoc2, thoc3, thoc5, thoc6 and thoc7. Component of the transcription/export (TREX) complex at least composed of alyref/thoc4, ddx39b, sarnp/cip29, chtop and the THO subcomplex. Interacts with thoc7.

Its subcellular location is the nucleus. It is found in the nucleus speckle. The protein resides in the cytoplasm. In terms of biological role, component of the THO subcomplex of the TREX complex which is thought to couple mRNA transcription, processing and nuclear export, and which specifically associates with spliced mRNA and not with unspliced pre-mRNA. Plays a key structural role in the oligomerization of the THO-ddx39b complex. TREX is recruited to spliced mRNAs by a transcription-independent mechanism, binds to mRNA upstream of the exon-junction complex (EJC) and is recruited in a splicing- and cap-dependent manner to a region near the 5' end of the mRNA where it functions in mRNA export to the cytoplasm via the TAP/NXF1 pathway. May be involved in cell differentiation. The chain is THO complex subunit 5 homolog B (thoc5-b) from Xenopus laevis (African clawed frog).